The sequence spans 114 residues: MRLLLLTFLGVCCLTPWVVEGVGTEVLEESSCVNLQTQRLPVQKIKTYIIWEGAMRAVIFVTKRGLKICADPEAKWVKAAIKTVDGRASTRKNMAETVPTGAQRSTSTAITLTG.

The first 21 residues, 1–21, serve as a signal peptide directing secretion; sequence MRLLLLTFLGVCCLTPWVVEG. Cysteines 32 and 69 form a disulfide. The segment at 92–114 is disordered; it reads KNMAETVPTGAQRSTSTAITLTG. A compositionally biased stretch (polar residues) spans 100–114; that stretch reads TGAQRSTSTAITLTG.

It belongs to the intercrine gamma family. Expressed in activated CD8(+) T cells. In the thymus, expressed by medullary thymic epithelial cells.

The protein resides in the secreted. Chemotactic activity for lymphocytes but not for monocytes or neutrophils. In thymus, mediates medullary accumulation of thymic dendritic cells and contributes to regulatoy T cell development, playing a role in self-tolerance establishment. The protein is Lymphotactin (Xcl1) of Mus musculus (Mouse).